A 123-amino-acid chain; its full sequence is Large ribosomal subunit protein bL12 (123 aa).

It belongs to the bacterial ribosomal protein bL12 family. In terms of assembly, homodimer. Part of the ribosomal stalk of the 50S ribosomal subunit. Forms a multimeric L10(L12)X complex, where L10 forms an elongated spine to which 2 to 4 L12 dimers bind in a sequential fashion. Binds GTP-bound translation factors.

Forms part of the ribosomal stalk which helps the ribosome interact with GTP-bound translation factors. Is thus essential for accurate translation. The polypeptide is Large ribosomal subunit protein bL12 (Chlorobium phaeovibrioides (strain DSM 265 / 1930) (Prosthecochloris vibrioformis (strain DSM 265))).